The chain runs to 442 residues: tRNA-2-methylthio-N(6)-dimethylallyladenosine synthase (442 aa).

The 116-residue stretch at Gln2–Arg117 folds into the MTTase N-terminal domain. [4Fe-4S] cluster-binding residues include Cys11, Cys47, Cys80, Cys157, Cys161, and Cys164. In terms of domain architecture, Radical SAM core spans Lys143 to Ala374. One can recognise a TRAM domain in the interval Arg377–Asn442.

Belongs to the methylthiotransferase family. MiaB subfamily. As to quaternary structure, monomer. [4Fe-4S] cluster is required as a cofactor.

The protein resides in the cytoplasm. It carries out the reaction N(6)-dimethylallyladenosine(37) in tRNA + (sulfur carrier)-SH + AH2 + 2 S-adenosyl-L-methionine = 2-methylsulfanyl-N(6)-dimethylallyladenosine(37) in tRNA + (sulfur carrier)-H + 5'-deoxyadenosine + L-methionine + A + S-adenosyl-L-homocysteine + 2 H(+). Functionally, catalyzes the methylthiolation of N6-(dimethylallyl)adenosine (i(6)A), leading to the formation of 2-methylthio-N6-(dimethylallyl)adenosine (ms(2)i(6)A) at position 37 in tRNAs that read codons beginning with uridine. This chain is tRNA-2-methylthio-N(6)-dimethylallyladenosine synthase, found in Ehrlichia chaffeensis (strain ATCC CRL-10679 / Arkansas).